Reading from the N-terminus, the 88-residue chain is Small ribosomal subunit protein uS17 (88 aa).

The protein belongs to the universal ribosomal protein uS17 family. As to quaternary structure, part of the 30S ribosomal subunit.

Its function is as follows. One of the primary rRNA binding proteins, it binds specifically to the 5'-end of 16S ribosomal RNA. The sequence is that of Small ribosomal subunit protein uS17 from Lactobacillus delbrueckii subsp. bulgaricus (strain ATCC 11842 / DSM 20081 / BCRC 10696 / JCM 1002 / NBRC 13953 / NCIMB 11778 / NCTC 12712 / WDCM 00102 / Lb 14).